The primary structure comprises 446 residues: NADH-quinone oxidoreductase subunit D (446 aa).

This sequence belongs to the complex I 49 kDa subunit family. In terms of assembly, NDH-1 is composed of 14 different subunits. Subunits NuoB, C, D, E, F, and G constitute the peripheral sector of the complex.

The protein resides in the cell membrane. It catalyses the reaction a quinone + NADH + 5 H(+)(in) = a quinol + NAD(+) + 4 H(+)(out). Its function is as follows. NDH-1 shuttles electrons from NADH, via FMN and iron-sulfur (Fe-S) centers, to quinones in the respiratory chain. The immediate electron acceptor for the enzyme in this species is believed to be a menaquinone. Couples the redox reaction to proton translocation (for every two electrons transferred, four hydrogen ions are translocated across the cytoplasmic membrane), and thus conserves the redox energy in a proton gradient. The sequence is that of NADH-quinone oxidoreductase subunit D from Nocardioides sp. (strain ATCC BAA-499 / JS614).